Consider the following 578-residue polypeptide: Matrix metalloproteinase-17 (578 aa).

Disordered stretches follow at residues 1–22 and 107–133; these read MGRR…PGPG and PRCS…TKWS. Residues 1–39 form the signal peptide; the sequence is MGRRPRGPGSPRGPGPPRPGPGLPPLLLVLALAAHGGCA. The span at 11–22 shows a compositional bias: pro residues; the sequence is PRGPGPPRPGPG. A propeptide spanning residues 40–124 is cleaved from the precursor; the sequence is APAPRAEDLS…PPGAQSRRKR (85 aa). Residues 107–114 carry the Cysteine switch motif; it reads PRCSLPDL. A Zn(2+)-binding site is contributed by Cys109. N-linked (GlcNAc...) asparagine glycosylation occurs at Asn136. Zn(2+) is bound at residue His247. Glu248 is a catalytic residue. The Zn(2+) site is built by His251 and His257. Residues 301-334 are disordered; that stretch reads PTAQLDTPEPEEPPLLPEPPNNRSSTPPQKDVPH. An N-linked (GlcNAc...) asparagine glycan is attached at Asn322. Hemopexin repeat units follow at residues 333–382, 386–432, 436–479, and 480–527; these read PHRC…WRGL, LDSV…SLPP, DAVF…WRGV, and PSML…WLVC. The cysteines at positions 336 and 527 are disulfide-linked. The GPI-anchor amidated serine moiety is linked to residue Ser558. Positions 559–578 are cleaved as a propeptide — removed in mature form; that stretch reads DAHRLALPSLLLLTPLLWGL.

It belongs to the peptidase M10A family. It depends on Zn(2+) as a cofactor. Ca(2+) is required as a cofactor. In terms of processing, the precursor is cleaved by a furin endopeptidase. In terms of tissue distribution, expressed by monocytes and macrophages.

Its subcellular location is the cell membrane. It localises to the secreted. It is found in the extracellular space. The protein resides in the extracellular matrix. Functionally, endopeptidase that degrades various components of the extracellular matrix, such as fibrin. May be involved in the activation of membrane-bound precursors of growth factors or inflammatory mediators, such as tumor necrosis factor-alpha. May also be involved in tumoral process. Not obvious if able to proteolytically activate progelatinase A. Does not hydrolyze collagen types I, II, III, IV and V, gelatin, fibronectin, laminin, decorin nor alpha1-antitrypsin. In Mus musculus (Mouse), this protein is Matrix metalloproteinase-17 (Mmp17).